The primary structure comprises 118 residues: Large ribosomal subunit protein bL19 (118 aa).

It belongs to the bacterial ribosomal protein bL19 family.

Its function is as follows. This protein is located at the 30S-50S ribosomal subunit interface and may play a role in the structure and function of the aminoacyl-tRNA binding site. The protein is Large ribosomal subunit protein bL19 of Helicobacter pylori (strain P12).